Reading from the N-terminus, the 661-residue chain is ATP-dependent RNA helicase vasa (661 aa).

Residues 1-10 are compositionally biased toward acidic residues; the sequence is MSDDWDDEPI. The interval 1 to 186 is disordered; that stretch reads MSDDWDDEPI…RRRRNEDDIN (186 aa). Ser22 bears the Phosphoserine mark. Phosphothreonine is present on Thr27. Gly residues-rich tracts occupy residues 38–52 and 60–83; these read DGVG…GYQG and RIGG…GGFH. The segment covering 85 to 95 has biased composition (basic and acidic residues); that stretch reads GRREGERDFRG. A run of 5 repeats spans residues 93 to 99, 100 to 106, 107 to 113, 114 to 120, and 121 to 127. Residues 93-127 form a 5 X 7 AA tandem repeats of [FS]-R-G-G-[EQ]-G-G region; that stretch reads FRGGEGGFRGGQGGSRGGQGGSRGGQGGFRGGEGG. Residues 96–129 show a composition bias toward gly residues; the sequence is GEGGFRGGQGGSRGGQGGSRGGQGGFRGGEGGFR. Basic and acidic residues predominate over residues 131 to 172; sequence RLYENEDGDERRGRLDREERGGERRGRLDREERGGERGERGD. Positions 184–188 match the B30.2/SPRY domain-binding motif motif; it reads DINNN. A required for posterior localization in oocyte region spans residues 184 to 203; it reads DINNNNNIVEDVERKREFYI. The Q motif motif lies at 245–273; sequence QHFTSADLRDIIIDNVNKSGYKIPTPIQK. Positions 276-453 constitute a Helicase ATP-binding domain; it reads IPVISSGRDL…GEFLKNYVFV (178 aa). ATP is bound at residue 289–296; the sequence is AQTGSGKT. A DEAD box motif is present at residues 399-402; it reads DEAD. In terms of domain architecture, Helicase C-terminal spans 477-624; the sequence is KRSKLIEILS…TVPDFLRTCG (148 aa).

It belongs to the DEAD box helicase family. DDX4/VASA subfamily. Interacts with eIF5B and faf. Interacts with gus (via B30.2/SPRY domain) and Fsn (via B30.2/SPRY domain). Interacts with aub, me31B, eIF-4a and TER94. Interacts with piwi; this interaction is RNA independent. Interacts with Dcr-1 and Fmr1; these interactions occur in the polar granules. It depends on Mg(2+) as a cofactor. In terms of processing, ubiquitinated during oogenesis. Deubiquitinated by faf, which protects this protein from proteasome-mediated degradation. As to expression, abundantly expressed in the female germline. Gus and faf are required for vas expression in the posterior pole of the oocyte.

It is found in the cytoplasm. The protein localises to the perinuclear region. The protein resides in the cytoplasmic ribonucleoprotein granule. It carries out the reaction ATP + H2O = ADP + phosphate + H(+). In terms of biological role, involved in translational control mechanisms operating in early stages of oogenesis. Required maternally in many stages of oogenesis, including cystocyte differentiation, oocyte differentiation, and specification of anterior-posterior polarity in the developing cysts. Essential for the formation and/or structural integrity of perinuclear nuage particles during germ cell formation. Required for gus, Fsn and aub accumulation at the posterior pole of the embryo. Required for the localization of vas to the perinuclear region of nurse cells. May have a role in production of piwi-interacting RNA (piRNA). The chain is ATP-dependent RNA helicase vasa from Drosophila melanogaster (Fruit fly).